The following is a 172-amino-acid chain: Ribosome maturation factor RimM (172 aa).

The PRC barrel domain occupies 96–168; the sequence is EGEFYYHEII…RVDVEIPEGL (73 aa).

The protein belongs to the RimM family. In terms of assembly, binds ribosomal protein uS19.

Its subcellular location is the cytoplasm. An accessory protein needed during the final step in the assembly of 30S ribosomal subunit, possibly for assembly of the head region. Essential for efficient processing of 16S rRNA. May be needed both before and after RbfA during the maturation of 16S rRNA. It has affinity for free ribosomal 30S subunits but not for 70S ribosomes. The protein is Ribosome maturation factor RimM of Streptococcus gordonii (strain Challis / ATCC 35105 / BCRC 15272 / CH1 / DL1 / V288).